The following is a 423-amino-acid chain: Gamma-glutamyl phosphate reductase (423 aa).

It belongs to the gamma-glutamyl phosphate reductase family.

Its subcellular location is the cytoplasm. It carries out the reaction L-glutamate 5-semialdehyde + phosphate + NADP(+) = L-glutamyl 5-phosphate + NADPH + H(+). It functions in the pathway amino-acid biosynthesis; L-proline biosynthesis; L-glutamate 5-semialdehyde from L-glutamate: step 2/2. In terms of biological role, catalyzes the NADPH-dependent reduction of L-glutamate 5-phosphate into L-glutamate 5-semialdehyde and phosphate. The product spontaneously undergoes cyclization to form 1-pyrroline-5-carboxylate. The protein is Gamma-glutamyl phosphate reductase of Burkholderia orbicola (strain MC0-3).